The chain runs to 213 residues: Small ribosomal subunit protein eS6 (213 aa).

The protein belongs to the eukaryotic ribosomal protein eS6 family.

The chain is Small ribosomal subunit protein eS6 from Sulfolobus acidocaldarius (strain ATCC 33909 / DSM 639 / JCM 8929 / NBRC 15157 / NCIMB 11770).